The primary structure comprises 210 residues: Glutathione S-transferase 2 (210 aa).

The GST N-terminal domain maps to 1-80 (MDFYYLPLSA…YLVEKYGKQN (80 aa)). Residues serine 9, 50 to 52 (HTI), and 64 to 66 (ESR) each bind glutathione. The region spanning 87 to 208 (CPKKRALINQ…AGCLEMKKYF (122 aa)) is the GST C-terminal domain.

Belongs to the GST superfamily. Theta family. Homodimer.

The enzyme catalyses RX + glutathione = an S-substituted glutathione + a halide anion + H(+). Functionally, conjugation of reduced glutathione to a wide number of exogenous and endogenous hydrophobic electrophiles. The protein is Glutathione S-transferase 2 (Gst2) of Musca domestica (House fly).